The following is a 392-amino-acid chain: Formate-dependent phosphoribosylglycinamide formyltransferase (392 aa).

Residues 22 to 23 (EL) and glutamate 82 contribute to the N(1)-(5-phospho-beta-D-ribosyl)glycinamide site. ATP is bound by residues arginine 114, lysine 155, 160-165 (SSGKGQ), 195-198 (EGVV), and glutamate 203. The ATP-grasp domain maps to 119-308 (RLAAEELGLP…EFALHVRAFL (190 aa)). Positions 267 and 279 each coordinate Mg(2+). N(1)-(5-phospho-beta-D-ribosyl)glycinamide is bound by residues aspartate 286, lysine 355, and 362–363 (RR).

It belongs to the PurK/PurT family. Homodimer.

It carries out the reaction N(1)-(5-phospho-beta-D-ribosyl)glycinamide + formate + ATP = N(2)-formyl-N(1)-(5-phospho-beta-D-ribosyl)glycinamide + ADP + phosphate + H(+). It participates in purine metabolism; IMP biosynthesis via de novo pathway; N(2)-formyl-N(1)-(5-phospho-D-ribosyl)glycinamide from N(1)-(5-phospho-D-ribosyl)glycinamide (formate route): step 1/1. Functionally, involved in the de novo purine biosynthesis. Catalyzes the transfer of formate to 5-phospho-ribosyl-glycinamide (GAR), producing 5-phospho-ribosyl-N-formylglycinamide (FGAR). Formate is provided by PurU via hydrolysis of 10-formyl-tetrahydrofolate. The protein is Formate-dependent phosphoribosylglycinamide formyltransferase of Salmonella arizonae (strain ATCC BAA-731 / CDC346-86 / RSK2980).